Consider the following 655-residue polypeptide: Alpha-amylase (655 aa).

The active-site Nucleophile is E123. D214 functions as the Proton donor in the catalytic mechanism.

The protein belongs to the glycosyl hydrolase 57 family.

The enzyme catalyses Endohydrolysis of (1-&gt;4)-alpha-D-glucosidic linkages in polysaccharides containing three or more (1-&gt;4)-alpha-linked D-glucose units.. This is Alpha-amylase (amyA) from Pyrococcus abyssi (strain GE5 / Orsay).